The primary structure comprises 347 residues: Autoinducer 2 import system permease protein LsrC (347 aa).

Helical transmembrane passes span 14–34 (LLAI…YLSV), 39–59 (MVFS…MVML), 72–92 (GMCA…PVAC), 93–113 (LATL…VAWL), 115–135 (IPAI…MLLW), 155–175 (VFLG…LMAW), 213–233 (LNGG…GFIP), 249–269 (VLGG…ILGA), and 284–304 (IPAW…LVFD).

The protein belongs to the binding-protein-dependent transport system permease family. AraH/RbsC subfamily. The complex is composed of two ATP-binding proteins (LsrA), two transmembrane proteins (LsrC and LsrD) and a solute-binding protein (LsrB).

The protein resides in the cell inner membrane. Part of the ABC transporter complex LsrABCD involved in autoinducer 2 (AI-2) import. Probably responsible for the translocation of the substrate across the membrane. The polypeptide is Autoinducer 2 import system permease protein LsrC (lsrC) (Salmonella typhi).